Here is a 993-residue protein sequence, read N- to C-terminus: Protein translocase subunit SecA (993 aa).

ATP-binding positions include Gln102, Gly120–Thr124, and Asp523. Positions Glu910 to Ala962 are disordered. A compositionally biased stretch (basic and acidic residues) spans Asp936–Gln951. Positions 979, 981, 990, and 991 each coordinate Zn(2+).

It belongs to the SecA family. In terms of assembly, monomer and homodimer. Part of the essential Sec protein translocation apparatus which comprises SecA, SecYEG and auxiliary proteins SecDF. Other proteins may also be involved. Requires Zn(2+) as cofactor.

The protein resides in the cell inner membrane. It is found in the cytoplasm. It carries out the reaction ATP + H2O + cellular proteinSide 1 = ADP + phosphate + cellular proteinSide 2.. Functionally, part of the Sec protein translocase complex. Interacts with the SecYEG preprotein conducting channel. Has a central role in coupling the hydrolysis of ATP to the transfer of proteins into and across the cell membrane, serving as an ATP-driven molecular motor driving the stepwise translocation of polypeptide chains across the membrane. This is Protein translocase subunit SecA from Koribacter versatilis (strain Ellin345).